We begin with the raw amino-acid sequence, 330 residues long: Aspartate--ammonia ligase (330 aa).

It belongs to the class-II aminoacyl-tRNA synthetase family. AsnA subfamily.

It is found in the cytoplasm. The catalysed reaction is L-aspartate + NH4(+) + ATP = L-asparagine + AMP + diphosphate + H(+). It functions in the pathway amino-acid biosynthesis; L-asparagine biosynthesis; L-asparagine from L-aspartate (ammonia route): step 1/1. This Histophilus somni (strain 2336) (Haemophilus somnus) protein is Aspartate--ammonia ligase.